The following is a 380-amino-acid chain: Beta sliding clamp (380 aa).

Belongs to the beta sliding clamp family. As to quaternary structure, forms a ring-shaped head-to-tail homodimer around DNA which binds and tethers DNA polymerases and other proteins to the DNA. The DNA replisome complex has a single clamp-loading complex (3 tau and 1 each of delta, delta', psi and chi subunits) which binds 3 Pol III cores (1 core on the leading strand and 2 on the lagging strand) each with a beta sliding clamp dimer. Additional proteins in the replisome are other copies of gamma, psi and chi, Ssb, DNA helicase and RNA primase.

The protein resides in the cytoplasm. Its function is as follows. Confers DNA tethering and processivity to DNA polymerases and other proteins. Acts as a clamp, forming a ring around DNA (a reaction catalyzed by the clamp-loading complex) which diffuses in an ATP-independent manner freely and bidirectionally along dsDNA. Initially characterized for its ability to contact the catalytic subunit of DNA polymerase III (Pol III), a complex, multichain enzyme responsible for most of the replicative synthesis in bacteria; Pol III exhibits 3'-5' exonuclease proofreading activity. The beta chain is required for initiation of replication as well as for processivity of DNA replication. The chain is Beta sliding clamp (dnaN) from Halalkalibacterium halodurans (strain ATCC BAA-125 / DSM 18197 / FERM 7344 / JCM 9153 / C-125) (Bacillus halodurans).